Reading from the N-terminus, the 458-residue chain is NADH-quinone oxidoreductase subunit N (458 aa).

14 helical membrane-spanning segments follow: residues 2–22, 30–50, 62–82, 93–113, 118–138, 153–173, 196–216, 235–255, 261–281, 290–310, 319–339, 361–381, 397–417, and 438–458; these read LLIL…CFAL, IIYN…FKYS, GINI…SLII, AIKF…FVAI, FLLL…LAGF, FILG…IYGF, LIIG…SSPL, FTSA…KLII, INYN…AFGA, LMAY…ILPN, LYIL…IMLF, IAAL…LTGF, FTLA…YLKV, and LLLI…IILF.

Belongs to the complex I subunit 2 family. As to quaternary structure, NDH-1 is composed of 14 different subunits. Subunits NuoA, H, J, K, L, M, N constitute the membrane sector of the complex.

The protein resides in the cell inner membrane. It catalyses the reaction a quinone + NADH + 5 H(+)(in) = a quinol + NAD(+) + 4 H(+)(out). Its function is as follows. NDH-1 shuttles electrons from NADH, via FMN and iron-sulfur (Fe-S) centers, to quinones in the respiratory chain. The immediate electron acceptor for the enzyme in this species is believed to be ubiquinone. Couples the redox reaction to proton translocation (for every two electrons transferred, four hydrogen ions are translocated across the cytoplasmic membrane), and thus conserves the redox energy in a proton gradient. The sequence is that of NADH-quinone oxidoreductase subunit N from Rickettsia typhi (strain ATCC VR-144 / Wilmington).